A 213-amino-acid chain; its full sequence is MKKQTLRIGVGGPVGSGKTALLRSLCSAMRDYYNIAVVTNDIYTQEDAKFLTQHEALDADRILGVETGGCPHTAIREDASMNLAAIDQLLERHGALDVVFVESGGDNLSATFSPELSDFTIYVIDVSAGDKIPRKGGPGITKSDLLIINKTDLAPLVGASLDVMAHDAKIQRGDRPFIFSNLKSAQGLDEIIQIIVSEGMLEAKEIPAAKAVV.

12–19 lines the GTP pocket; the sequence is GPVGSGKT.

This sequence belongs to the SIMIBI class G3E GTPase family. UreG subfamily. In terms of assembly, homodimer. UreD, UreF and UreG form a complex that acts as a GTP-hydrolysis-dependent molecular chaperone, activating the urease apoprotein by helping to assemble the nickel containing metallocenter of UreC. The UreE protein probably delivers the nickel.

It localises to the cytoplasm. In terms of biological role, facilitates the functional incorporation of the urease nickel metallocenter. This process requires GTP hydrolysis, probably effectuated by UreG. This chain is Urease accessory protein UreG, found in Marinomonas sp. (strain MWYL1).